The primary structure comprises 293 residues: DNA repair protein RecO (293 aa).

This sequence belongs to the RecO family.

In terms of biological role, involved in DNA repair and RecF pathway recombination. The polypeptide is DNA repair protein RecO (Acaryochloris marina (strain MBIC 11017)).